The primary structure comprises 369 residues: UDP-N-acetylglucosamine--N-acetylmuramyl-(pentapeptide) pyrophosphoryl-undecaprenol N-acetylglucosamine transferase (369 aa).

Residues 16 to 18, Asn-130, Arg-171, Ser-196, and Gln-297 each bind UDP-N-acetyl-alpha-D-glucosamine; that span reads TGG.

It belongs to the glycosyltransferase 28 family. MurG subfamily.

The protein resides in the cell inner membrane. It carries out the reaction di-trans,octa-cis-undecaprenyl diphospho-N-acetyl-alpha-D-muramoyl-L-alanyl-D-glutamyl-meso-2,6-diaminopimeloyl-D-alanyl-D-alanine + UDP-N-acetyl-alpha-D-glucosamine = di-trans,octa-cis-undecaprenyl diphospho-[N-acetyl-alpha-D-glucosaminyl-(1-&gt;4)]-N-acetyl-alpha-D-muramoyl-L-alanyl-D-glutamyl-meso-2,6-diaminopimeloyl-D-alanyl-D-alanine + UDP + H(+). It participates in cell wall biogenesis; peptidoglycan biosynthesis. Functionally, cell wall formation. Catalyzes the transfer of a GlcNAc subunit on undecaprenyl-pyrophosphoryl-MurNAc-pentapeptide (lipid intermediate I) to form undecaprenyl-pyrophosphoryl-MurNAc-(pentapeptide)GlcNAc (lipid intermediate II). The sequence is that of UDP-N-acetylglucosamine--N-acetylmuramyl-(pentapeptide) pyrophosphoryl-undecaprenol N-acetylglucosamine transferase from Desulfotalea psychrophila (strain LSv54 / DSM 12343).